A 429-amino-acid chain; its full sequence is Probable M18 family aminopeptidase 2 (429 aa).

Zn(2+) contacts are provided by histidine 82, histidine 156, and histidine 401.

This sequence belongs to the peptidase M18 family. Zn(2+) is required as a cofactor.

This chain is Probable M18 family aminopeptidase 2, found in Azotobacter vinelandii (strain DJ / ATCC BAA-1303).